Reading from the N-terminus, the 358-residue chain is DNA polymerase IV (358 aa).

Positions 4–185 (IIHVDMDCFY…LPLIKIPGVG (182 aa)) constitute a UmuC domain. The Mg(2+) site is built by Asp-8 and Asp-103. Residue Glu-104 is part of the active site.

Belongs to the DNA polymerase type-Y family. Monomer. Mg(2+) is required as a cofactor.

The protein resides in the cytoplasm. The enzyme catalyses DNA(n) + a 2'-deoxyribonucleoside 5'-triphosphate = DNA(n+1) + diphosphate. Its function is as follows. Poorly processive, error-prone DNA polymerase involved in untargeted mutagenesis. Copies undamaged DNA at stalled replication forks, which arise in vivo from mismatched or misaligned primer ends. These misaligned primers can be extended by PolIV. Exhibits no 3'-5' exonuclease (proofreading) activity. May be involved in translesional synthesis, in conjunction with the beta clamp from PolIII. The protein is DNA polymerase IV of Shewanella pealeana (strain ATCC 700345 / ANG-SQ1).